The following is a 477-amino-acid chain: tRNA-2-methylthio-N(6)-dimethylallyladenosine synthase (477 aa).

Residues 3-120 (KKLHIKTWGC…LPTMIKQVQE (118 aa)) enclose the MTTase N-terminal domain. Positions 12, 49, 83, 157, 161, and 164 each coordinate [4Fe-4S] cluster. One can recognise a Radical SAM core domain in the interval 143–375 (RAEGATAFVS…QHVINNQSMQ (233 aa)). Positions 378 to 441 (RAMLGSTQRI…PNSLRGKFLR (64 aa)) constitute a TRAM domain.

This sequence belongs to the methylthiotransferase family. MiaB subfamily. Monomer. It depends on [4Fe-4S] cluster as a cofactor.

Its subcellular location is the cytoplasm. It carries out the reaction N(6)-dimethylallyladenosine(37) in tRNA + (sulfur carrier)-SH + AH2 + 2 S-adenosyl-L-methionine = 2-methylsulfanyl-N(6)-dimethylallyladenosine(37) in tRNA + (sulfur carrier)-H + 5'-deoxyadenosine + L-methionine + A + S-adenosyl-L-homocysteine + 2 H(+). Its function is as follows. Catalyzes the methylthiolation of N6-(dimethylallyl)adenosine (i(6)A), leading to the formation of 2-methylthio-N6-(dimethylallyl)adenosine (ms(2)i(6)A) at position 37 in tRNAs that read codons beginning with uridine. This Aeromonas hydrophila subsp. hydrophila (strain ATCC 7966 / DSM 30187 / BCRC 13018 / CCUG 14551 / JCM 1027 / KCTC 2358 / NCIMB 9240 / NCTC 8049) protein is tRNA-2-methylthio-N(6)-dimethylallyladenosine synthase.